The chain runs to 221 residues: Flavin-dependent thymidylate synthase (221 aa).

Residues 9 to 209 enclose the ThyX domain; sequence GFVKLLDHMG…PWTYESFIRY (201 aa). Residues serine 55, 78 to 80, and glutamate 86 contribute to the FAD site; that span reads RHR. Residues 75–78, 86–90, and arginine 148 contribute to the dUMP site; these read QWMR and ELSGR. The ThyX motif motif lies at 78-88; the sequence is RHRIASYNELS. Residues 164–166 and asparagine 170 contribute to the FAD site; that span reads NAR. Arginine 175 contributes to the dUMP binding site. Arginine 175 acts as the Involved in ionization of N3 of dUMP, leading to its activation in catalysis.

This sequence belongs to the thymidylate synthase ThyX family. As to quaternary structure, homotetramer. It depends on FAD as a cofactor.

The enzyme catalyses dUMP + (6R)-5,10-methylene-5,6,7,8-tetrahydrofolate + NADPH + H(+) = dTMP + (6S)-5,6,7,8-tetrahydrofolate + NADP(+). The protein operates within pyrimidine metabolism; dTTP biosynthesis. Catalyzes the reductive methylation of 2'-deoxyuridine-5'-monophosphate (dUMP) to 2'-deoxythymidine-5'-monophosphate (dTMP) while utilizing 5,10-methylenetetrahydrofolate (mTHF) as the methyl donor, and NADPH and FADH(2) as the reductant. This is Flavin-dependent thymidylate synthase from Pseudothermotoga lettingae (strain ATCC BAA-301 / DSM 14385 / NBRC 107922 / TMO) (Thermotoga lettingae).